The primary structure comprises 180 residues: Protein PHLOEM PROTEIN 2-LIKE A9 (180 aa).

The disordered stretch occupies residues 1–21 (MSSQKSSHHKADSKMEQDNNR). Positions 9 to 21 (HKADSKMEQDNNR) are enriched in basic and acidic residues.

This chain is Protein PHLOEM PROTEIN 2-LIKE A9 (PP2A9), found in Arabidopsis thaliana (Mouse-ear cress).